Here is a 385-residue protein sequence, read N- to C-terminus: Lipid-A-disaccharide synthase 2 (385 aa).

Belongs to the LpxB family.

The catalysed reaction is a lipid X + a UDP-2-N,3-O-bis[(3R)-3-hydroxyacyl]-alpha-D-glucosamine = a lipid A disaccharide + UDP + H(+). The protein operates within bacterial outer membrane biogenesis; LPS lipid A biosynthesis. In terms of biological role, condensation of UDP-2,3-diacylglucosamine and 2,3-diacylglucosamine-1-phosphate to form lipid A disaccharide, a precursor of lipid A, a phosphorylated glycolipid that anchors the lipopolysaccharide to the outer membrane of the cell. The polypeptide is Lipid-A-disaccharide synthase 2 (Legionella pneumophila subsp. pneumophila (strain Philadelphia 1 / ATCC 33152 / DSM 7513)).